The primary structure comprises 311 residues: Methionyl-tRNA formyltransferase (311 aa).

109–112 is a binding site for (6S)-5,6,7,8-tetrahydrofolate; that stretch reads SLLP.

It belongs to the Fmt family.

It carries out the reaction L-methionyl-tRNA(fMet) + (6R)-10-formyltetrahydrofolate = N-formyl-L-methionyl-tRNA(fMet) + (6S)-5,6,7,8-tetrahydrofolate + H(+). Functionally, attaches a formyl group to the free amino group of methionyl-tRNA(fMet). The formyl group appears to play a dual role in the initiator identity of N-formylmethionyl-tRNA by promoting its recognition by IF2 and preventing the misappropriation of this tRNA by the elongation apparatus. This Staphylococcus aureus (strain USA300) protein is Methionyl-tRNA formyltransferase.